The chain runs to 138 residues: Transcriptional activator protein Pur-alpha (138 aa).

S70 bears the Phosphoserine mark.

Belongs to the PUR DNA-binding protein family. In terms of assembly, homodimer, heterodimer with PURB and heterotrimer with PURB and YBX1/Y-box protein 1. Interacts with FMR1; this interaction occurs in association with polyribosome.

The protein localises to the nucleus. Its function is as follows. This is a probable transcription activator that specifically binds the purine-rich single strand of the PUR element located upstream of the c-Myc gene. May play a role in the initiation of DNA replication and in recombination. In Rattus norvegicus (Rat), this protein is Transcriptional activator protein Pur-alpha.